The chain runs to 467 residues: 3-isopropylmalate dehydratase large subunit (467 aa).

The [4Fe-4S] cluster site is built by cysteine 349, cysteine 409, and cysteine 412. The segment at proline 422–arginine 443 is disordered.

The protein belongs to the aconitase/IPM isomerase family. LeuC type 1 subfamily. In terms of assembly, heterodimer of LeuC and LeuD. [4Fe-4S] cluster is required as a cofactor.

It carries out the reaction (2R,3S)-3-isopropylmalate = (2S)-2-isopropylmalate. It participates in amino-acid biosynthesis; L-leucine biosynthesis; L-leucine from 3-methyl-2-oxobutanoate: step 2/4. Its function is as follows. Catalyzes the isomerization between 2-isopropylmalate and 3-isopropylmalate, via the formation of 2-isopropylmaleate. This Paramagnetospirillum magneticum (strain ATCC 700264 / AMB-1) (Magnetospirillum magneticum) protein is 3-isopropylmalate dehydratase large subunit.